The primary structure comprises 441 residues: Serine carboxypeptidase-like 3 (441 aa).

The signal sequence occupies residues 1-30; it reads MASNYVFSVLRSLLLLIHTVFLGQHHVSSA. Cystine bridges form between cysteine 88–cysteine 331, cysteine 252–cysteine 266, and cysteine 290–cysteine 297. Residue asparagine 109 is glycosylated (N-linked (GlcNAc...) asparagine). Serine 184 is an active-site residue. N-linked (GlcNAc...) asparagine glycosylation is present at asparagine 350. Aspartate 366 is an active-site residue. The N-linked (GlcNAc...) asparagine glycan is linked to asparagine 382. The active site involves histidine 419.

Belongs to the peptidase S10 family. As to expression, expressed in roots.

The protein resides in the secreted. Its function is as follows. Probable carboxypeptidase. The sequence is that of Serine carboxypeptidase-like 3 (SCPL3) from Arabidopsis thaliana (Mouse-ear cress).